Reading from the N-terminus, the 606-residue chain is 4-hydroxy-3-methylbut-2-en-1-yl diphosphate synthase (flavodoxin) (606 aa).

4 residues coordinate [4Fe-4S] cluster: C513, C516, C547, and E554.

The protein belongs to the IspG family. It depends on [4Fe-4S] cluster as a cofactor.

The catalysed reaction is (2E)-4-hydroxy-3-methylbut-2-enyl diphosphate + oxidized [flavodoxin] + H2O + 2 H(+) = 2-C-methyl-D-erythritol 2,4-cyclic diphosphate + reduced [flavodoxin]. It functions in the pathway isoprenoid biosynthesis; isopentenyl diphosphate biosynthesis via DXP pathway; isopentenyl diphosphate from 1-deoxy-D-xylulose 5-phosphate: step 5/6. Functionally, converts 2C-methyl-D-erythritol 2,4-cyclodiphosphate (ME-2,4cPP) into 1-hydroxy-2-methyl-2-(E)-butenyl 4-diphosphate. The sequence is that of 4-hydroxy-3-methylbut-2-en-1-yl diphosphate synthase (flavodoxin) from Chlamydia caviae (strain ATCC VR-813 / DSM 19441 / 03DC25 / GPIC) (Chlamydophila caviae).